Consider the following 489-residue polypeptide: Rhamnulokinase (489 aa).

13 to 17 (ASSGR) lines the ATP pocket. C68 and C222 are oxidised to a cystine. Residues G83 and 236–238 (HDT) each bind substrate. The active-site Proton acceptor is D237. T259 serves as a coordination point for ATP. N296 contacts substrate. Q304 lines the ATP pocket. C353 and C370 are oxidised to a cystine. G402 provides a ligand contact to ATP. The cysteines at positions 413 and 417 are disulfide-linked.

This sequence belongs to the rhamnulokinase family. Requires Mg(2+) as cofactor.

The enzyme catalyses L-rhamnulose + ATP = L-rhamnulose 1-phosphate + ADP + H(+). It participates in carbohydrate degradation; L-rhamnose degradation; glycerone phosphate from L-rhamnose: step 2/3. Involved in the catabolism of L-rhamnose (6-deoxy-L-mannose). Catalyzes the transfer of the gamma-phosphate group from ATP to the 1-hydroxyl group of L-rhamnulose to yield L-rhamnulose 1-phosphate. The chain is Rhamnulokinase from Enterobacter sp. (strain 638).